The sequence spans 418 residues: Serine hydroxymethyltransferase (418 aa).

(6S)-5,6,7,8-tetrahydrofolate contacts are provided by residues Leu-121 and 125–127; that span reads GHL. At Lys-230 the chain carries N6-(pyridoxal phosphate)lysine. Residue 356 to 358 participates in (6S)-5,6,7,8-tetrahydrofolate binding; it reads SPF.

The protein belongs to the SHMT family. In terms of assembly, homodimer. Requires pyridoxal 5'-phosphate as cofactor.

Its subcellular location is the cytoplasm. The enzyme catalyses (6R)-5,10-methylene-5,6,7,8-tetrahydrofolate + glycine + H2O = (6S)-5,6,7,8-tetrahydrofolate + L-serine. It participates in one-carbon metabolism; tetrahydrofolate interconversion. It functions in the pathway amino-acid biosynthesis; glycine biosynthesis; glycine from L-serine: step 1/1. Catalyzes the reversible interconversion of serine and glycine with tetrahydrofolate (THF) serving as the one-carbon carrier. This reaction serves as the major source of one-carbon groups required for the biosynthesis of purines, thymidylate, methionine, and other important biomolecules. Also exhibits THF-independent aldolase activity toward beta-hydroxyamino acids, producing glycine and aldehydes, via a retro-aldol mechanism. The chain is Serine hydroxymethyltransferase from Shewanella woodyi (strain ATCC 51908 / MS32).